Here is a 235-residue protein sequence, read N- to C-terminus: Small ribosomal subunit protein uS2c (235 aa).

Belongs to the universal ribosomal protein uS2 family.

It is found in the plastid. The protein localises to the chloroplast. This chain is Small ribosomal subunit protein uS2c (rps2), found in Huperzia lucidula (Shining clubmoss).